A 45-amino-acid polypeptide reads, in one-letter code: Metallothionein-like protein 1A (45 aa).

This sequence belongs to the metallothionein superfamily. Type 15 family. As to expression, expressed in phloem and mesophyll cells of leaves, vascular tissues of cotyledons, sepals and petals. Expressed in anthers. Expressed in root endodermis and at lower levels in cortex of mature region of roots.

Metallothioneins have a high content of cysteine residues that bind various heavy metals. Functions as a metal chelator of copper (Cu) and zinc (Zn). Plays a role in Cu homeostasis in the roots under elevated Cu concentration. Functions cooperatively with the phytochelatin synthase PCS1 to protect plants from Cu and cadmium (Cd) toxicity. Plays a role in Cu homeostasis, specifically in the remobilization of Cu from senescing leaves. The mobilization of Cu from internal sources is important for seed development. Confers tolerance to Cd and plays a role in Cd and Zn homeostasis. In Arabidopsis thaliana (Mouse-ear cress), this protein is Metallothionein-like protein 1A (MT1A).